The chain runs to 208 residues: UPF0301 protein MAB_4928c (208 aa).

The protein belongs to the UPF0301 (AlgH) family.

The protein is UPF0301 protein MAB_4928c of Mycobacteroides abscessus (strain ATCC 19977 / DSM 44196 / CCUG 20993 / CIP 104536 / JCM 13569 / NCTC 13031 / TMC 1543 / L948) (Mycobacterium abscessus).